The sequence spans 170 residues: Viral interleukin-10 homolog (170 aa).

Positions 1–23 are cleaved as a signal peptide; the sequence is MERRLVVTLQCLVLLYLAPECGG. 2 disulfides stabilise this stretch: Cys27-Cys119 and Cys73-Cys125. The stretch at 97–145 forms a coiled coil; it reads EAKDHVNSLGENLKTLRLRLRRCHRFLPCENKSKAVEQIKNAFNKLQEK. Asn127 carries an N-linked (GlcNAc...) asparagine; by host glycan.

The protein belongs to the IL-10 family. As to quaternary structure, homodimer.

The protein resides in the secreted. Inhibits IFN-gamma synthesis. Down-regulates the expression of the host TAP1 gene (transporter associated with antigen processing), thereby affecting the transport of peptides into the endoplasmic reticulum and subsequent peptide loading by MHC class I molecules. In consequence, infected cells are masked for immune recognition by cytotoxic T-lymphocytes. The chain is Viral interleukin-10 homolog from Epstein-Barr virus (strain AG876) (HHV-4).